Here is a 258-residue protein sequence, read N- to C-terminus: MVLIRVLANLVMLHLSYGEKSSELVIGGRPCNINQHRSLALLYNSSGFLCGGTLINQQWVLSAAHCDMENMQIYLGLHNFSLPNMDQKRRVAEEKFFCLSNKSYTKWDKDIMLIKLNRRVKTSTHIAPLSLPSNPPRLRSVCRIMGWGSITSPRETLPYVPHCANIMILRYWVCRAIYGSLPAKSRTLCAGVPRRRIGSCLGDSGGPLICNGQIQGIASWGSDPCVNHGAPGVYTKVFDYNDWIQSIIAGNTAATCPP.

A signal peptide spans 1 to 18; that stretch reads MVLIRVLANLVMLHLSYG. Positions 19 to 24 are excised as a propeptide; sequence EKSSEL. A Peptidase S1 domain is found at 25-249; the sequence is VIGGRPCNIN…YNDWIQSIIA (225 aa). Cystine bridges form between Cys31/Cys163, Cys50/Cys66, Cys98/Cys256, Cys142/Cys210, Cys174/Cys189, and Cys200/Cys225. Asn44 carries an N-linked (GlcNAc...) asparagine glycan. The Charge relay system role is filled by His65. Residues Asn79 and Asn101 are each glycosylated (N-linked (GlcNAc...) asparagine). Asp110 acts as the Charge relay system in catalysis. The active-site Charge relay system is the Ser204.

The protein belongs to the peptidase S1 family. Snake venom subfamily. In terms of assembly, monomer. Post-translationally, glycosylated. Contains 8.5% of hexoses, 5.8% of hexosamines and 0.8% of sialic acids. As to expression, expressed by the venom gland.

Its subcellular location is the secreted. Its activity is regulated as follows. Inhibited by diisopropylfluorophosphate (DFP) and PMSF, and partially by soybean trypsin inhibitor, but not by EDTA. Functionally, degrades alpha chain of fibrinogen (FGA), and has strong caseinolytic activity. Cleaves oxidized insulin B-chain at '40-Tyr-|-Leu-41', '48-Phe-|-Phe-49' and '49-Phe-|-Tyr-50', and glucagon at the bonds '62-Tyr-|-Ser-63', 66-Leu-|-Asp-67' and '78-Leu-|-Met-79' bonds. This is Alpha-fibrinogenase from Macrovipera lebetinus (Levantine viper).